A 645-amino-acid polypeptide reads, in one-letter code: Acetyl-coenzyme A synthetase (645 aa).

CoA is bound by residues 190–193 (RGGK) and Thr308. ATP-binding positions include 384–386 (GEP), 408–413 (DTWWQT), Asp497, and Arg512. Ser520 is a binding site for CoA. Arg523 lines the ATP pocket. Mg(2+) is bound by residues Val534, His536, and Ile539. Lys606 bears the N6-acetyllysine mark.

Belongs to the ATP-dependent AMP-binding enzyme family. Mg(2+) serves as cofactor. Acetylated. Deacetylation by the SIR2-homolog deacetylase activates the enzyme.

It carries out the reaction acetate + ATP + CoA = acetyl-CoA + AMP + diphosphate. Catalyzes the conversion of acetate into acetyl-CoA (AcCoA), an essential intermediate at the junction of anabolic and catabolic pathways. AcsA undergoes a two-step reaction. In the first half reaction, AcsA combines acetate with ATP to form acetyl-adenylate (AcAMP) intermediate. In the second half reaction, it can then transfer the acetyl group from AcAMP to the sulfhydryl group of CoA, forming the product AcCoA. This Alcanivorax borkumensis (strain ATCC 700651 / DSM 11573 / NCIMB 13689 / SK2) protein is Acetyl-coenzyme A synthetase.